Reading from the N-terminus, the 364-residue chain is DNA replication and repair protein RecF (364 aa).

An ATP-binding site is contributed by 30 to 37; that stretch reads GNNGMGKT.

Belongs to the RecF family.

Its subcellular location is the cytoplasm. Functionally, the RecF protein is involved in DNA metabolism; it is required for DNA replication and normal SOS inducibility. RecF binds preferentially to single-stranded, linear DNA. It also seems to bind ATP. In Porphyromonas gingivalis (strain ATCC 33277 / DSM 20709 / CIP 103683 / JCM 12257 / NCTC 11834 / 2561), this protein is DNA replication and repair protein RecF.